Reading from the N-terminus, the 359-residue chain is 1-deoxy-D-xylulose 5-phosphate reductoisomerase (359 aa).

Residues Thr7, Gly8, Ser9, Ile10, Gly31, Lys32, Asn33, and Asn111 each contribute to the NADPH site. A 1-deoxy-D-xylulose 5-phosphate-binding site is contributed by Lys112. Residue Glu113 coordinates NADPH. A Mn(2+)-binding site is contributed by Asp131. Residues Ser132, Glu133, Ser155, and His178 each contribute to the 1-deoxy-D-xylulose 5-phosphate site. Glu133 is a Mn(2+) binding site. Position 184 (Gly184) interacts with NADPH. 1-deoxy-D-xylulose 5-phosphate is bound by residues Ser191, Asn196, Lys197, and Glu200. Glu200 is a binding site for Mn(2+).

The protein belongs to the DXR family. The cofactor is Mg(2+). Mn(2+) is required as a cofactor.

It catalyses the reaction 2-C-methyl-D-erythritol 4-phosphate + NADP(+) = 1-deoxy-D-xylulose 5-phosphate + NADPH + H(+). The protein operates within isoprenoid biosynthesis; isopentenyl diphosphate biosynthesis via DXP pathway; isopentenyl diphosphate from 1-deoxy-D-xylulose 5-phosphate: step 1/6. Its function is as follows. Catalyzes the NADPH-dependent rearrangement and reduction of 1-deoxy-D-xylulose-5-phosphate (DXP) to 2-C-methyl-D-erythritol 4-phosphate (MEP). The sequence is that of 1-deoxy-D-xylulose 5-phosphate reductoisomerase from Campylobacter lari (strain RM2100 / D67 / ATCC BAA-1060).